Reading from the N-terminus, the 318-residue chain is MSKPDVSTFQGLILALQEYWAKQGCVVLQPLDMEVGAGTFHPATFLRAIGPETWNTAYVQPCRRPTDGRYGENPNRLQHYYQFQVALKPSPDNIQELYLGSLAHLGLDTNIHDIRFVEDNWESPTLGAWGLGWEVWLNGMEVTQFTYFQQVGGLECYPVTGEITYGLERIAMYLQDVNSIYDLVWTKRPDGGIVTYGDVFHQNEVEMSHFNFSEANVEFLFQTFDVCEAESRRLIEKGLPLPAYEMVMKASHAFNLLDARQAISVTERQRFILRVRTLARDVAQAYFDARLKLGFPLADPKLRDEVIARVEAEMEKKA.

The protein belongs to the class-II aminoacyl-tRNA synthetase family. Tetramer of two alpha and two beta subunits.

It localises to the cytoplasm. It carries out the reaction tRNA(Gly) + glycine + ATP = glycyl-tRNA(Gly) + AMP + diphosphate. This is Glycine--tRNA ligase alpha subunit from Saccharophagus degradans (strain 2-40 / ATCC 43961 / DSM 17024).